The sequence spans 541 residues: Protein yellow (541 aa).

Positions 1 to 21 (MFQDKGWVLVTLIALVTPSWA) are cleaved as a signal peptide. A glycan (N-linked (GlcNAc...) asparagine) is linked at Asn-144.

The protein belongs to the major royal jelly protein family.

It is found in the secreted. Its function is as follows. Controls the pigmentation pattern of the adult cuticle and larval mouth parts. This chain is Protein yellow (y), found in Drosophila erecta (Fruit fly).